A 342-amino-acid chain; its full sequence is 4-hydroxy-2-oxovalerate aldolase (342 aa).

A Pyruvate carboxyltransferase domain is found at 5–257; sequence ITLHDMTLRD…DTGVDVWKIQ (253 aa). Position 13–14 (13–14) interacts with substrate; that stretch reads RD. Mn(2+) is bound at residue D14. The active-site Proton acceptor is H17. Substrate contacts are provided by S167 and H196. H196 and H198 together coordinate Mn(2+). Y287 provides a ligand contact to substrate.

This sequence belongs to the 4-hydroxy-2-oxovalerate aldolase family.

The enzyme catalyses (S)-4-hydroxy-2-oxopentanoate = acetaldehyde + pyruvate. In Acidovorax sp. (strain JS42), this protein is 4-hydroxy-2-oxovalerate aldolase.